A 512-amino-acid polypeptide reads, in one-letter code: MDASLLLSVALAVVLIPLSLALLNRLRLGRLPPGPRPWPVLGNLRQIKPIRCRCFQEWAERYGPVISVWFGSGLTVVVSTSELAKEVLKENDQQLADRPRNRSTQRFSRNGQDLIWADYGPHYIKVRKLCNLELFTPKRLEALRPIREDEVTAMVESVYRAATAPGNEGKPMVVRNHLSMVAFNNITRLAFGKRFMNANGDIDEQGREFKTIVNNGIKIGASLSVAEFIWYLRWLCPLNEELYKTHNERRDRLTMKIIEEHAKSLKESGAKQHFVDALFTLKQQYDLSEDTVIGLLWDMITAGMDTTVISVEWAMAELVRNPRVQKKLQEELDRVVGRDRVMLETDFQNLPYLQAVVKESLRLHPPTPLMLPHKASTNVKIGGYDIPKGANVMVNVWAVARDPKVWSNPLEYRPERFLEENIDIKGSDFRVLPFGAGRRVCPGAQLGINLVASMIGHLLHHFEWSLPEGTRPEDVNMMESPGLVTFMGTPLQAVAKPRLEKEELYNRVPVEM.

A helical transmembrane segment spans residues 3–23 (ASLLLSVALAVVLIPLSLALL). Cys441 is a binding site for heme.

Belongs to the cytochrome P450 family. Heme is required as a cofactor.

It is found in the membrane. This Sorghum bicolor (Sorghum) protein is Cytochrome P450 98A1 (CYP98A1).